The following is a 269-amino-acid chain: Protein OPG079 (269 aa).

It belongs to the orthopoxvirus OPG079 family. In terms of assembly, homoomultimer (Potential). Interacts with the small subunit of ribonucleotide reductase. Interacts with host FAM111A; this interaction protomtes OPG079 degradation through autophagy.

Its subcellular location is the host cytoplasm. Its function is as follows. Plays an essential role in viral DNA replication. Binds to ssDNA with high affinity and localizes to cytoplasmic factories where nascent viral genomes accumulate. May disrupt loops, hairpins and other secondary structures present on ssDNA to reduce and eliminate pausing of viral DNA polymerase at specific sites during elongation. This chain is Protein OPG079 (OPG079), found in Bos taurus (Bovine).